Here is a 102-residue protein sequence, read N- to C-terminus: Carboxysome shell protein CcmK3 (102 aa).

Residues Ala-4–Pro-90 enclose the BMC domain.

The protein belongs to the bacterial microcompartments protein family. CcmK subfamily. Interacts stably with CcmK4, probably forms heterohexamers with a 1:2 CcmK3:CcmK4 stoichiometry. Bulky residues in the pore region probably preclude the formation of homohexamers by this subunit.

The protein localises to the carboxysome. Its function is as follows. A non-essential, minor shell protein of the carboxysome, a polyhedral inclusion where RuBisCO (ribulose bisphosphate carboxylase, rbcL-rbcS) is sequestered. Hexamers form sheets that form the facets of the polyhedral carboxysome. In PCC 7942 there are several CcmK paralogs with presumably functional differences. This subunit probably only makes heterohexamers with CcmK4. The CcmK3-CcmK4 heterohexmers have been suggested to cap other hexamers, perhaps to alter metabolite flux. This is Carboxysome shell protein CcmK3 from Synechococcus elongatus (strain ATCC 33912 / PCC 7942 / FACHB-805) (Anacystis nidulans R2).